We begin with the raw amino-acid sequence, 98 residues long: uncharacterized protein (98 aa).

This is an uncharacterized protein from Schizosaccharomyces pombe (strain 972 / ATCC 24843) (Fission yeast).